We begin with the raw amino-acid sequence, 883 residues long: 3-hydroxy-3-methylglutaryl-coenzyme A reductase (883 aa).

Topologically, residues 1-9 are cytoplasmic; it reads MLSRLFRMH. The chain crosses the membrane as a helical span at residues 10–39; the sequence is GQFVASHPWEVIVGTVTLTICMMSMNMFTG. Topologically, residues 40-56 are lumenal; sequence NDKICGWNYACPKFEED. A helical transmembrane segment spans residues 57 to 78; sequence VLSSDIIILTITRCIAILYIYF. Topologically, residues 79–89 are cytoplasmic; it reads QFQNLRQLGSK. Residues 90-114 form a helical membrane-spanning segment; that stretch reads YILGIAGLFTIFSSFVFSTVVIHFL. The Lumenal segment spans residues 115–123; sequence DKELTGLNE. A helical membrane pass occupies residues 124–149; sequence ALPFFLLLIDLSKASALAKFALSSNS. At 150–159 the chain is on the cytoplasmic side; sequence QDEVRDNIAR. A helical transmembrane segment spans residues 160–187; the sequence is GMAILGPTFTLEALVECLVIGVGTMSGV. Over 188-191 the chain is Lumenal; it reads RQLE. Residues 192-220 traverse the membrane as a helical segment; it reads IMCCFGCMSVLANYFAFMTFFPACVSLVL. Residues 221-249 are Cytoplasmic-facing; it reads ELSRESREGRPIWQLSQFASVLEEEEDNK. A helical membrane pass occupies residues 250 to 276; sequence PNPVTQRVKMIMSLGLVLVHAHSRWIS. The Lumenal portion of the chain corresponds to 277-316; that stretch reads EPSSQNSTSISDHEVTTMLDDMMPKRVEPSMPLWQFYLSR. Asn282 carries N-linked (GlcNAc...) asparagine glycosylation. A helical transmembrane segment spans residues 317–341; sequence MVTMDVEQIITLGLALLLAVKYIFF. At 342–883 the chain is on the cytoplasmic side; it reads EQTETESTFS…LPGTCTKKAA (542 aa). The segment at 373 to 396 is disordered; it reads REPEQEKTVHVSTTEEASSKEETE. Residues Glu554, Lys686, and Asp762 each act as charge relay system in the active site. His861 (proton donor) is an active-site residue.

This sequence belongs to the HMG-CoA reductase family. In terms of assembly, homotetramer. Homodimer.

The protein resides in the endoplasmic reticulum membrane. It localises to the peroxisome membrane. It catalyses the reaction (R)-mevalonate + 2 NADP(+) + CoA = (3S)-3-hydroxy-3-methylglutaryl-CoA + 2 NADPH + 2 H(+). The protein operates within metabolic intermediate biosynthesis; (R)-mevalonate biosynthesis; (R)-mevalonate from acetyl-CoA: step 3/3. Functionally, catalyzes the conversion of (3S)-hydroxy-3-methylglutaryl-CoA (HMG-CoA) to mevalonic acid, the rate-limiting step in the synthesis of cholesterol and other isoprenoids, thus plays a critical role in cellular cholesterol homeostasis. This is 3-hydroxy-3-methylglutaryl-coenzyme A reductase (hmgcr) from Xenopus laevis (African clawed frog).